A 131-amino-acid chain; its full sequence is Thrombocorticin (131 aa).

Cys-3 and Cys-111 are oxidised to a cystine. Positions 28 to 60 are disordered; the sequence is RNESVEVKDSNGNTVSRGSGSSSSGGTFTVINM. The span at 37–54 shows a compositional bias: low complexity; the sequence is SNGNTVSRGSGSSSSGGT. A Pseudodomain-swapping motif motif is present at residues 117 to 131; that stretch reads DFNDVFVLITGLVRG.

Its function is as follows. Binds to fucose and mannose in a calcium-dependent manner (in vitro). Acts as an agonist for human thrombopoietin receptor MPL (in vitro). Binding of sugar-moieties may promote the interaction with human MPL on the cell surface (in vitro). Catalyzes MPL dimerization and activation, and modulates internalization of the receptor (in vitro). Exhibits proliferation activity in murine recombinant Ba/F3 cells expressing human MPL (Ba/F3-huMPL) (in vitro). Induces phosphorylation of STAT5 in recombinant Ba/F3-huMPL cells, possibly by stimulating MPL on the cell surface to transduce signals via Jak/STAT signaling pathway (in vitro). Does not aggregate rabbit erythrocytes, indicating absent lectin-like agglutination activity (in vitro). The sequence is that of Thrombocorticin from Corticium sp. (Marine sponge).